The chain runs to 314 residues: 4-hydroxy-3-methylbut-2-enyl diphosphate reductase (314 aa).

[4Fe-4S] cluster is bound at residue Cys12. Positions 41 and 74 each coordinate (2E)-4-hydroxy-3-methylbut-2-enyl diphosphate. Dimethylallyl diphosphate contacts are provided by His41 and His74. The isopentenyl diphosphate site is built by His41 and His74. Position 96 (Cys96) interacts with [4Fe-4S] cluster. Position 124 (His124) interacts with (2E)-4-hydroxy-3-methylbut-2-enyl diphosphate. His124 lines the dimethylallyl diphosphate pocket. His124 lines the isopentenyl diphosphate pocket. The active-site Proton donor is Glu126. Thr167 contacts (2E)-4-hydroxy-3-methylbut-2-enyl diphosphate. Residue Cys197 participates in [4Fe-4S] cluster binding. (2E)-4-hydroxy-3-methylbut-2-enyl diphosphate contacts are provided by Ser225, Ser226, Asn227, and Ser269. Residues Ser225, Ser226, Asn227, and Ser269 each contribute to the dimethylallyl diphosphate site. Residues Ser225, Ser226, Asn227, and Ser269 each contribute to the isopentenyl diphosphate site.

It belongs to the IspH family. Requires [4Fe-4S] cluster as cofactor.

The catalysed reaction is isopentenyl diphosphate + 2 oxidized [2Fe-2S]-[ferredoxin] + H2O = (2E)-4-hydroxy-3-methylbut-2-enyl diphosphate + 2 reduced [2Fe-2S]-[ferredoxin] + 2 H(+). It catalyses the reaction dimethylallyl diphosphate + 2 oxidized [2Fe-2S]-[ferredoxin] + H2O = (2E)-4-hydroxy-3-methylbut-2-enyl diphosphate + 2 reduced [2Fe-2S]-[ferredoxin] + 2 H(+). It participates in isoprenoid biosynthesis; dimethylallyl diphosphate biosynthesis; dimethylallyl diphosphate from (2E)-4-hydroxy-3-methylbutenyl diphosphate: step 1/1. Its pathway is isoprenoid biosynthesis; isopentenyl diphosphate biosynthesis via DXP pathway; isopentenyl diphosphate from 1-deoxy-D-xylulose 5-phosphate: step 6/6. In terms of biological role, catalyzes the conversion of 1-hydroxy-2-methyl-2-(E)-butenyl 4-diphosphate (HMBPP) into a mixture of isopentenyl diphosphate (IPP) and dimethylallyl diphosphate (DMAPP). Acts in the terminal step of the DOXP/MEP pathway for isoprenoid precursor biosynthesis. The polypeptide is 4-hydroxy-3-methylbut-2-enyl diphosphate reductase (Haemophilus influenzae (strain PittEE)).